Reading from the N-terminus, the 179-residue chain is Peptide deformylase 2 (179 aa).

2 residues coordinate Fe cation: Cys-104 and His-146. Residue Glu-147 is part of the active site. Fe cation is bound at residue His-150.

This sequence belongs to the polypeptide deformylase family. Fe(2+) serves as cofactor.

It catalyses the reaction N-terminal N-formyl-L-methionyl-[peptide] + H2O = N-terminal L-methionyl-[peptide] + formate. Functionally, removes the formyl group from the N-terminal Met of newly synthesized proteins. Requires at least a dipeptide for an efficient rate of reaction. N-terminal L-methionine is a prerequisite for activity but the enzyme has broad specificity at other positions. The sequence is that of Peptide deformylase 2 from Streptomyces coelicolor (strain ATCC BAA-471 / A3(2) / M145).